The sequence spans 262 residues: Serine/arginine-rich SC35-like splicing factor SCL30A (262 aa).

Disordered regions lie at residues 1–38 (MRGR…LPTS) and 115–262 (ENRK…SPSQ). Residues serine 9 and serine 20 each carry the phosphoserine modification. Residues 37 to 115 (TSLLVRNLRH…RELTVVFAEE (79 aa)) form the RRM domain. A compositionally biased stretch (basic and acidic residues) spans 115 to 140 (ENRKKPTEMRTRDRGGRSNRFQDRRR). Positions 150-161 (PPRRGRRSRSRS) are enriched in basic residues. A phosphoserine mark is found at serine 166, serine 174, serine 176, and serine 178. The segment covering 180-190 (QDRRYEKERSY) has biased composition (basic and acidic residues). Serine 191 and serine 193 each carry phosphoserine. Residues 209 to 226 (VKSHSRSPRRSVSPRKNR) show a composition bias toward basic residues. The span at 234 to 246 (RSQSPVPRQSRSP) shows a compositional bias: low complexity. Phosphoserine is present on residues serine 235, serine 259, and serine 261.

It belongs to the splicing factor SR family. SCL subfamily. Component of the spliceosome. Interacts with SNRNP35, CYP59 and RS2Z33.

The protein localises to the nucleus speckle. Its function is as follows. Involved in intron recognition and spliceosome assembly. Binds probably to multiple 5'-GAAG-3' repeats found in its third intron, suggesting autoregulation of alternative splicing. May be necessary for accurate splicing of the 3' region of introns. This Arabidopsis thaliana (Mouse-ear cress) protein is Serine/arginine-rich SC35-like splicing factor SCL30A (SCL30A).